A 560-amino-acid polypeptide reads, in one-letter code: DNA ligase B (560 aa).

The active-site N6-AMP-lysine intermediate is the Lys124.

It belongs to the NAD-dependent DNA ligase family. LigB subfamily.

The catalysed reaction is NAD(+) + (deoxyribonucleotide)n-3'-hydroxyl + 5'-phospho-(deoxyribonucleotide)m = (deoxyribonucleotide)n+m + AMP + beta-nicotinamide D-nucleotide.. Its function is as follows. Catalyzes the formation of phosphodiester linkages between 5'-phosphoryl and 3'-hydroxyl groups in double-stranded DNA using NAD as a coenzyme and as the energy source for the reaction. The chain is DNA ligase B from Escherichia coli (strain ATCC 8739 / DSM 1576 / NBRC 3972 / NCIMB 8545 / WDCM 00012 / Crooks).